Consider the following 218-residue polypeptide: MSLGILGKKLGMSQLFDDQGRAVPVTLIEAGPCRITQLKSADTDGYAAVQIGFQLIREKLINKPSKGHLAKSGNDLLRHLREYRVENSSEFELGASITVDDFEKGQKVDISGDTMGRGFAGYQKRHGFSRGPMSHGSKNHRLPGSIGAGTTPGRVYPGKRMAGRMGGKKVTTRALEILKIDTNHNLLVVKGSVPGKPGSLLNIRPAKRVGAPTQQGGK.

2 disordered regions span residues 128-167 (FSRG…RMGG) and 199-218 (SLLN…QGGK).

It belongs to the universal ribosomal protein uL3 family. As to quaternary structure, part of the 50S ribosomal subunit. Forms a cluster with proteins L14 and L19.

One of the primary rRNA binding proteins, it binds directly near the 3'-end of the 23S rRNA, where it nucleates assembly of the 50S subunit. In Prochlorococcus marinus (strain NATL2A), this protein is Large ribosomal subunit protein uL3.